A 199-amino-acid chain; its full sequence is Ribosomal RNA large subunit methyltransferase E (199 aa).

Positions 53, 55, 73, 92, and 114 each coordinate S-adenosyl-L-methionine. Residue lysine 154 is the Proton acceptor of the active site.

The protein belongs to the class I-like SAM-binding methyltransferase superfamily. RNA methyltransferase RlmE family.

Its subcellular location is the cytoplasm. The enzyme catalyses uridine(2552) in 23S rRNA + S-adenosyl-L-methionine = 2'-O-methyluridine(2552) in 23S rRNA + S-adenosyl-L-homocysteine + H(+). In terms of biological role, specifically methylates the uridine in position 2552 of 23S rRNA at the 2'-O position of the ribose in the fully assembled 50S ribosomal subunit. The polypeptide is Ribosomal RNA large subunit methyltransferase E (Treponema denticola (strain ATCC 35405 / DSM 14222 / CIP 103919 / JCM 8153 / KCTC 15104)).